The following is a 100-amino-acid chain: Small ribosomal subunit protein uS14c (100 aa).

This sequence belongs to the universal ribosomal protein uS14 family. Part of the 30S ribosomal subunit.

Its subcellular location is the plastid. It localises to the chloroplast. In terms of biological role, binds 16S rRNA, required for the assembly of 30S particles. This Draba nemorosa (Woodland whitlowgrass) protein is Small ribosomal subunit protein uS14c.